We begin with the raw amino-acid sequence, 183 residues long: Gamma-crystallin N-B (183 aa).

4 Beta/gamma crystallin 'Greek key' domains span residues 6–46 (GKIC…RVES), 47–89 (GAWI…RPIR), 95–136 (YRME…RVFG), and 138–180 (GAWV…RRIV).

The protein belongs to the beta/gamma-crystallin family. In terms of assembly, monomer.

Functionally, crystallins are the dominant structural components of the vertebrate eye lens. This Danio rerio (Zebrafish) protein is Gamma-crystallin N-B (crygnb).